The chain runs to 301 residues: Sulfate adenylyltransferase subunit 2 (301 aa).

The disordered stretch occupies residues Arg279–Phe301.

The protein belongs to the PAPS reductase family. CysD subfamily. Heterodimer composed of CysD, the smaller subunit, and CysN.

It catalyses the reaction sulfate + ATP + H(+) = adenosine 5'-phosphosulfate + diphosphate. The protein operates within sulfur metabolism; hydrogen sulfide biosynthesis; sulfite from sulfate: step 1/3. Functionally, with CysN forms the ATP sulfurylase (ATPS) that catalyzes the adenylation of sulfate producing adenosine 5'-phosphosulfate (APS) and diphosphate, the first enzymatic step in sulfur assimilation pathway. APS synthesis involves the formation of a high-energy phosphoric-sulfuric acid anhydride bond driven by GTP hydrolysis by CysN coupled to ATP hydrolysis by CysD. The chain is Sulfate adenylyltransferase subunit 2 from Mesorhizobium japonicum (strain LMG 29417 / CECT 9101 / MAFF 303099) (Mesorhizobium loti (strain MAFF 303099)).